Consider the following 667-residue polypeptide: Acetoacetyl-CoA synthetase (667 aa).

The protein belongs to the ATP-dependent AMP-binding enzyme family.

Its subcellular location is the cytoplasm. It localises to the cytosol. The enzyme catalyses acetoacetate + ATP + CoA = acetoacetyl-CoA + AMP + diphosphate. Its function is as follows. Converts acetoacetate to acetoacetyl-CoA in the cytosol. Ketone body-utilizing enzyme, responsible for the synthesis of cholesterol and fatty acids. The polypeptide is Acetoacetyl-CoA synthetase (AACS) (Gallus gallus (Chicken)).